A 444-amino-acid chain; its full sequence is Trigger factor (444 aa).

The PPIase FKBP-type domain maps to 166-251 (GDQIVIDFKG…VKAVKAPKAA (86 aa)).

The protein belongs to the FKBP-type PPIase family. Tig subfamily.

The protein localises to the cytoplasm. The catalysed reaction is [protein]-peptidylproline (omega=180) = [protein]-peptidylproline (omega=0). Involved in protein export. Acts as a chaperone by maintaining the newly synthesized protein in an open conformation. Functions as a peptidyl-prolyl cis-trans isomerase. The sequence is that of Trigger factor from Paracoccus denitrificans (strain Pd 1222).